The following is a 181-amino-acid chain: ATP synthase subunit delta (181 aa).

The protein belongs to the ATPase delta chain family. In terms of assembly, F-type ATPases have 2 components, F(1) - the catalytic core - and F(0) - the membrane proton channel. F(1) has five subunits: alpha(3), beta(3), gamma(1), delta(1), epsilon(1). F(0) has three main subunits: a(1), b(2) and c(10-14). The alpha and beta chains form an alternating ring which encloses part of the gamma chain. F(1) is attached to F(0) by a central stalk formed by the gamma and epsilon chains, while a peripheral stalk is formed by the delta and b chains.

It localises to the cell membrane. In terms of biological role, f(1)F(0) ATP synthase produces ATP from ADP in the presence of a proton or sodium gradient. F-type ATPases consist of two structural domains, F(1) containing the extramembraneous catalytic core and F(0) containing the membrane proton channel, linked together by a central stalk and a peripheral stalk. During catalysis, ATP synthesis in the catalytic domain of F(1) is coupled via a rotary mechanism of the central stalk subunits to proton translocation. This protein is part of the stalk that links CF(0) to CF(1). It either transmits conformational changes from CF(0) to CF(1) or is implicated in proton conduction. The polypeptide is ATP synthase subunit delta (Desulforamulus reducens (strain ATCC BAA-1160 / DSM 100696 / MI-1) (Desulfotomaculum reducens)).